Here is a 386-residue protein sequence, read N- to C-terminus: Innexin unc-9 (386 aa).

4 consecutive transmembrane segments (helical) span residues 33–53, 103–123, 197–217, and 282–302; these read TAII…GFPI, QWVP…TIVW, FLYI…IFLL, and IFLF…CSLF.

The protein belongs to the pannexin family. In terms of assembly, heterooligomer of unc-7 and unc-9. Interacts with F-actin. Expressed in PLM neurons (at protein level). Expressed in the nerve ring.

It localises to the cell membrane. The protein localises to the cell junction. The protein resides in the gap junction. In terms of biological role, structural component of gap junctions. Plays a role in maintaining gap junction activity to promote locomotion. This Caenorhabditis elegans protein is Innexin unc-9.